A 523-amino-acid chain; its full sequence is Ubiquilin (523 aa).

The Ubiquitin-like domain maps to 2-77 (VKINIKSSTD…VHLVKGAAPP (76 aa)). Positions 70 to 99 (LVKGAAPPPPPPVEQQVPTPSNTQPQGIPG) are disordered. STI1 domains follow at residues 100–135 (VPQNINDMMNNPMIQEMFNSRMMDSLLDNPDIFRDM) and 139–178 (NPEMREVLNNNPEMAQMLSDPRQLRQSLEMMRNPELMREM). The segment covering 215–227 (NQQAASQNQTNSN) has biased composition (low complexity). The tract at residues 215-325 (NQQAASQNQT…ASMFGGGGGG (111 aa)) is disordered. A compositionally biased stretch (polar residues) spans 228-241 (PIQTNTDANPNSQP). Residues 245–278 (PWSTNSSSTSSNPTSSSPSSRPTTGSSTNTGASN) show a composition bias toward low complexity. A compositionally biased stretch (gly residues) spans 285-296 (SGGGGGMGGGTN). Residues 297 to 310 (NTGTNNTGSTNNTG) are compositionally biased toward low complexity. STI1 domains lie at 339 to 380 (DPER…RQMM) and 383 to 415 (NPQLREAMNNPEFLNMMTNPENMNAMMQLQQAM). The region spanning 480–523 (PPEQRFRLQLEQLEELGFVDRAANISALTSTNGNINLAIDRLLR) is the UBA domain.

Stable protein which acts as an antagonist of nosA by repressing cellular differentiation after the tight-aggregate stage, when cells differentiate into two precursor cell types, prespore and prestalk cells, prior to the formation of fruiting bodies. The protein is Ubiquilin (ubqln) of Dictyostelium discoideum (Social amoeba).